Reading from the N-terminus, the 556-residue chain is Genetic interactor of prohibitins 3, mitochondrial (556 aa).

The N-terminal 21 residues, 1–21 (MLNLCHALRGVRQFSCSVIVK), are a transit peptide targeting the mitochondrion. One can recognise a CP-type G domain in the interval 113 to 305 (ESTLNDILNY…LFDLPGYSTS (193 aa)).

This sequence belongs to the TRAFAC class YlqF/YawG GTPase family. GEP3 subfamily.

The protein localises to the mitochondrion. In terms of biological role, interacts genetically with prohibitins and thus may be involved in the mitochondrial lipid metabolism. This chain is Genetic interactor of prohibitins 3, mitochondrial (GEP3), found in Saccharomyces cerevisiae (strain JAY291) (Baker's yeast).